The chain runs to 931 residues: Protein translocase subunit SecA (931 aa).

ATP-binding positions include Q87, 105–109 (GEGKT), and D515. 4 residues coordinate Zn(2+): C915, C917, C926, and H927.

The protein belongs to the SecA family. Monomer and homodimer. Part of the essential Sec protein translocation apparatus which comprises SecA, SecYEG and auxiliary proteins SecDF-YajC and YidC. Zn(2+) is required as a cofactor.

The protein resides in the cell inner membrane. It localises to the cytoplasm. It catalyses the reaction ATP + H2O + cellular proteinSide 1 = ADP + phosphate + cellular proteinSide 2.. In terms of biological role, part of the Sec protein translocase complex. Interacts with the SecYEG preprotein conducting channel. Has a central role in coupling the hydrolysis of ATP to the transfer of proteins into and across the cell membrane, serving both as a receptor for the preprotein-SecB complex and as an ATP-driven molecular motor driving the stepwise translocation of polypeptide chains across the membrane. In Burkholderia pseudomallei (strain K96243), this protein is Protein translocase subunit SecA.